Reading from the N-terminus, the 157-residue chain is Transcription elongation factor GreA (157 aa).

Residues 10 to 76 (THEGKQKLEQ…TLENMIRNAK (67 aa)) adopt a coiled-coil conformation.

The protein belongs to the GreA/GreB family.

Its function is as follows. Necessary for efficient RNA polymerase transcription elongation past template-encoded arresting sites. The arresting sites in DNA have the property of trapping a certain fraction of elongating RNA polymerases that pass through, resulting in locked ternary complexes. Cleavage of the nascent transcript by cleavage factors such as GreA or GreB allows the resumption of elongation from the new 3'terminus. GreA releases sequences of 2 to 3 nucleotides. The sequence is that of Transcription elongation factor GreA from Bacillus velezensis (strain DSM 23117 / BGSC 10A6 / LMG 26770 / FZB42) (Bacillus amyloliquefaciens subsp. plantarum).